The primary structure comprises 244 residues: Carboxy-S-adenosyl-L-methionine synthase (244 aa).

S-adenosyl-L-methionine contacts are provided by residues Y41, 66 to 68, 91 to 92, 119 to 120, N134, and R201; these read GCS, DN, and DI.

This sequence belongs to the class I-like SAM-binding methyltransferase superfamily. Cx-SAM synthase family. Homodimer.

The enzyme catalyses prephenate + S-adenosyl-L-methionine = carboxy-S-adenosyl-L-methionine + 3-phenylpyruvate + H2O. Catalyzes the conversion of S-adenosyl-L-methionine (SAM) to carboxy-S-adenosyl-L-methionine (Cx-SAM). In Photobacterium profundum (strain SS9), this protein is Carboxy-S-adenosyl-L-methionine synthase.